Reading from the N-terminus, the 709-residue chain is Solute carrier family 15 member 1 (709 aa).

Residues 1–21 (MGMSKSRGCFGYPLSIFFIVV) traverse the membrane as a helical segment. At 22–53 (NEFCERFSYYGMRALLVLYFRNFLGWDDNLST) the chain is on the extracellular side. Asn50 carries an N-linked (GlcNAc...) asparagine glycan. A helical transmembrane segment spans residues 54–74 (AIYHTFVALCYLTPILGALIA). Topologically, residues 75-82 (DSWLGKFK) are cytoplasmic. A helical transmembrane segment spans residues 83–103 (TIVSLSIVYTIGQAVISVSSI). At 104-118 (NDLTDHDHNGSPDSL) the chain is on the extracellular side. A helical membrane pass occupies residues 119–139 (PVHVALSMVGLALIALGTGGI). Residues 140–161 (KPCVSAFGGDQFEEGQEKQRNR) are Cytoplasmic-facing. A helical transmembrane segment spans residues 162–182 (FFSIFYLAINGGSLLSTIITP). The Extracellular portion of the chain corresponds to 183–198 (ILRVQQCGIHSQQACY). The chain crosses the membrane as a helical span at residues 199-219 (PLAFGVPAALMAVALIVFVLG). Residues 220–276 (SGMYKKFQPQGNIMGKVAKCIGFAIKNRFRHRSKAYPKREHWLDWAKEKYDERLISQ) are Cytoplasmic-facing. The chain crosses the membrane as a helical span at residues 277-297 (IKMVTKVMFLYIPLPMFWALF). Residues 298–327 (DQQGSRWTLQATTMNGKIGAIEIQPDQMQT) are Extracellular-facing. A helical transmembrane segment spans residues 328-348 (VNAILIVIMVPIVDAVVYPLI). Topologically, residues 349 to 361 (AKCGFNFTSLKKM) are cytoplasmic. A helical transmembrane segment spans residues 362–382 (TVGMFLASMAFVVAAIVQVEI). Residues 383–585 (DKTLPVFPGG…PPNTVNMALQ (203 aa)) lie on the Extracellular side of the membrane. The tract at residues 383–585 (DKTLPVFPGG…PPNTVNMALQ (203 aa)) is extracellular domain (ECD). N-linked (GlcNAc...) asparagine glycosylation is found at Asn406, Asn439, Asn515, and Asn532. The helical transmembrane segment at 586–606 (IPQYFLLTCGEVVFSVTGLEF) threads the bilayer. At 607-620 (SYSQAPSNMKSVLQ) the chain is on the cytoplasmic side. A helical transmembrane segment spans residues 621 to 641 (AGWLLTVAVGNIIVLIVAGAG). Over 642 to 646 (HFPKQ) the chain is Extracellular. A helical transmembrane segment spans residues 647–667 (WAEYILFASLLLVVCVIFAIM). Over 668-709 (ARFYTYINPAEIEAQFDEDEKKKGIGKENPYSSLEPVSQTNM) the chain is Cytoplasmic. Residues 690-709 (KGIGKENPYSSLEPVSQTNM) are disordered. The span at 697–709 (PYSSLEPVSQTNM) shows a compositional bias: polar residues.

This sequence belongs to the major facilitator superfamily. Proton-dependent oligopeptide transporter (POT/PTR) (TC 2.A.17) family. Interacts (via extracellular domain region) with trypsin.

Its subcellular location is the apical cell membrane. It carries out the reaction a dipeptide(out) + H(+)(out) = a dipeptide(in) + H(+)(in). It catalyses the reaction an L-amino acid tripeptide(out) + H(+)(out) = an L-amino acid tripeptide(in) + H(+)(in). The enzyme catalyses L-alanyl-L-lysine(out) + H(+)(out) = L-alanyl-L-lysine(in) + H(+)(in). The catalysed reaction is L-alanyl-L-proline(out) + H(+)(out) = L-alanyl-L-proline(in) + H(+)(in). It carries out the reaction L-alanyl-L-valine(out) + H(+)(out) = L-alanyl-L-valine(in) + H(+)(in). It catalyses the reaction carnosine(out) + H(+)(out) = carnosine(in) + H(+)(in). The enzyme catalyses glycyl-L-glutamine(out) + H(+)(out) = glycyl-L-glutamine(in) + H(+)(in). The catalysed reaction is glycyl-L-leucine(out) + H(+)(out) = glycyl-L-leucine(in) + H(+)(in). It carries out the reaction glycyl-L-proline(out) + H(+)(out) = glycyl-L-proline(in) + H(+)(in). It catalyses the reaction glycyl-sarcosine(out) + H(+)(out) = glycyl-sarcosine(in) + H(+)(in). The enzyme catalyses L-leucyl-L-leucine(out) + H(+)(out) = L-leucyl-L-leucine(in) + H(+)(in). The catalysed reaction is L-leucyl-L-proline(out) + H(+)(out) = L-leucyl-L-proline(in) + H(+)(in). It carries out the reaction L-phenylalanyl-L-leucine(out) + H(+)(out) = L-phenylalanyl-L-leucine(in) + H(+)(in). It catalyses the reaction L-phenylalanyl-L-phenylalanine(out) + H(+)(out) = L-phenylalanyl-L-phenylalanine(in) + H(+)(in). The enzyme catalyses L-lysyl-glycine(out) + H(+)(out) = L-lysyl-glycine(in) + H(+)(in). The catalysed reaction is L-tyrosylglycine(out) + H(+)(out) = L-tyrosylglycine(in) + H(+)(in). It carries out the reaction L-alanyl-L-aspartate(out) + 2 H(+)(out) = L-alanyl-L-aspartate(in) + 2 H(+)(in). It catalyses the reaction L-aspartyl-glycine(out) + 2 H(+)(out) = L-aspartyl-glycine(in) + 2 H(+)(in). The enzyme catalyses glycyl-L-aspartate(out) + 2 H(+)(out) = glycyl-L-aspartate(in) + 2 H(+)(in). The catalysed reaction is glycyl-L-glutamate(out) + 2 H(+)(out) = glycyl-L-glutamate(in) + 2 H(+)(in). It carries out the reaction L-alanyl-L-leucyl-L-alanine(out) + H(+)(out) = L-alanyl-L-leucyl-L-alanine(in) + H(+)(in). It catalyses the reaction L-alanyl-L-prolylglycine(out) + H(+)(out) = L-alanyl-L-prolylglycine(in) + H(+)(in). The enzyme catalyses glycylglycyl-L-isoleucine(out) + H(+)(out) = glycylglycyl-L-isoleucine(in) + H(+)(in). The catalysed reaction is glycylglycyl-L-proline(out) + H(+)(out) = glycylglycyl-L-proline(in) + H(+)(in). It carries out the reaction L-methionyl-L-phenylalanyl-L-methionine(out) + H(+)(out) = L-methionyl-L-phenylalanyl-L-methionine(in) + H(+)(in). It catalyses the reaction N-acetyl-D-muramoyl-L-alanyl-D-isoglutamine(out) + 2 H(+)(out) = N-acetyl-D-muramoyl-L-alanyl-D-isoglutamine(in) + 2 H(+)(in). The enzyme catalyses N(alpha)-formyl-L-methionyl-L-leucyl-L-phenylalanine(out) + 2 H(+)(out) = N(alpha)-formyl-L-methionyl-L-leucyl-L-phenylalanine(in) + 2 H(+)(in). Its function is as follows. Electrogenic proton-coupled amino-acid transporter that transports oligopeptides of 2 to 4 amino acids with a preference for dipeptides. Transports neutral and monovalently charged peptides with a proton to peptide stoichiometry of 1:1 or 2:1. Primarily responsible for the absorption of dietary di- and tripeptides from the small intestinal lumen. Mediates transepithelial transport of muramyl and N-formylated bacterial dipeptides contributing to recognition of pathogenic bacteria by the mucosal immune system. This Mus musculus (Mouse) protein is Solute carrier family 15 member 1.